The chain runs to 147 residues: Hemoglobin subunit beta (147 aa).

At Val2 the chain carries N-acetylvaline. The region spanning 3–147 is the Globin domain; the sequence is HLTGEEKAAV…VANALAHKYH (145 aa). Thr13 bears the Phosphothreonine mark. Residue Ser45 is modified to Phosphoserine. Lys60 is modified (N6-acetyllysine). His64 is a heme b binding site. Residue Lys83 is modified to N6-acetyllysine. His93 serves as a coordination point for heme b. The residue at position 94 (Cys94) is an S-nitrosocysteine. Lys145 is subject to N6-acetyllysine.

It belongs to the globin family. Heterotetramer of two alpha chains and two beta chains. As to expression, red blood cells.

Involved in oxygen transport from the lung to the various peripheral tissues. The sequence is that of Hemoglobin subunit beta (HBB) from Cheracebus torquatus (Collared titi monkey).